The following is a 351-amino-acid chain: Muscleblind-like protein 2a (351 aa).

4 C3H1-type zinc fingers span residues 13–41 (WLTLEVCRQFQRGTCSRSDEECKFAHPPK), 47–73 (NGRVIACFDSLKGRCTRENCKYLHPPA), 177–205 (TDKLEVCREFQRGNCARGETDCRFAHPSD), and 213–239 (DNTVTVCMDYIKSRCSREKCKYFHPPA).

Belongs to the muscleblind family. As to expression, expressed in fast and slow myotomal muscle, heart, liver, skin, brain and testis.

The protein localises to the nucleus. The protein resides in the cytoplasm. Its function is as follows. Involved in pre-mRNA alternative splicing regulation. RNA-binding protein that binds to 5'ACACCC-3' core sequence. The sequence is that of Muscleblind-like protein 2a (mbnl2a) from Takifugu rubripes (Japanese pufferfish).